A 529-amino-acid polypeptide reads, in one-letter code: Calcium/calmodulin-dependent protein kinase type II subunit gamma (529 aa).

One can recognise a Protein kinase domain in the interval 14 to 272; the sequence is YQLFEELGKG…ADQALKHPWV (259 aa). ATP is bound by residues 20–28 and Lys43; that span reads LGKGAFSVV. Asp136 acts as the Proton acceptor in catalysis. An autoinhibitory domain region spans residues 283–292; sequence HRQETVECLR. Thr287, Thr306, and Thr307 each carry phosphothreonine; by autocatalysis. Residues 294 to 316 are calmodulin-binding; the sequence is FNARRKLKGAILTTMLVSRNFSA. Ser311, Ser334, Ser349, Ser352, and Ser455 each carry phosphoserine. Residues 324–353 form a disordered region; that stretch reads KSDGGVKKRKSSSSVHLMPQSNNKNSLVSP. Positions 342–352 are enriched in polar residues; the sequence is PQSNNKNSLVS.

The protein belongs to the protein kinase superfamily. CAMK Ser/Thr protein kinase family. CaMK subfamily. In terms of assembly, CAMK2 is composed of 4 different chains: alpha (CAMK2A), beta (CAMK2B), gamma (CAMK2G), and delta (CAMK2D). The different isoforms assemble into homo- or heteromultimeric holoenzymes composed of 12 subunits with two hexameric rings stacked one on top of the other. Autophosphorylation of Thr-287 following activation by Ca(2+)/calmodulin. Phosphorylation of Thr-287 locks the kinase into an activated state.

It localises to the sarcoplasmic reticulum membrane. The catalysed reaction is L-seryl-[protein] + ATP = O-phospho-L-seryl-[protein] + ADP + H(+). It carries out the reaction L-threonyl-[protein] + ATP = O-phospho-L-threonyl-[protein] + ADP + H(+). With respect to regulation, activated by Ca(2+)/calmodulin. Binding of calmodulin results in conformational change that relieves intrasteric autoinhibition and allows autophosphorylation of Thr-287 which turns the kinase in a constitutively active form and confers to the kinase a Ca(2+)-independent activity. Calcium/calmodulin-dependent protein kinase that functions autonomously after Ca(2+)/calmodulin-binding and autophosphorylation, and is involved in sarcoplasmic reticulum Ca(2+) transport in skeletal muscle and may function in dendritic spine and synapse formation and neuronal plasticity. In slow-twitch muscles, is involved in regulation of sarcoplasmic reticulum (SR) Ca(2+) transport and in fast-twitch muscle participates in the control of Ca(2+) release from the SR through phosphorylation of the ryanodine receptor-coupling factor triadin. In the central nervous system, it is involved in the regulation of neurite formation and arborization. It may participate in the promotion of dendritic spine and synapse formation and maintenance of synaptic plasticity which enables long-term potentiation (LTP) and hippocampus-dependent learning. In response to interferon-gamma (IFN-gamma) stimulation, catalyzes phosphorylation of STAT1, stimulating the JAK-STAT signaling pathway. This chain is Calcium/calmodulin-dependent protein kinase type II subunit gamma (Camk2g), found in Mus musculus (Mouse).